Consider the following 1284-residue polypeptide: ABC multidrug transporter atrC (1284 aa).

Basic and acidic residues predominate over residues 1 to 11; that stretch reads MKSTAESKETP. A disordered region spans residues 1–24; sequence MKSTAESKETPSQDESTTSVPCTE. The next 6 membrane-spanning stretches (helical) occupy residues 55-75, 99-119, 178-198, 203-223, 282-302, and 320-340; these read AVAI…NLIF, AAEL…LSYT, IGLL…RLWC, TLIC…VAAV, LLGL…GLAF, and IFTV…LAPY. The ABC transmembrane type-1 1 domain maps to 55-346; sequence AVAILAACAS…LAPYSIEFSR (292 aa). The region spanning 381 to 626 is the ABC transporter 1 domain; the sequence is VELENVTFSY…DGVYAGLVKI (246 aa). N-linked (GlcNAc...) asparagine glycans are attached at residues N385 and N401. 416–423 contacts ATP; the sequence is GQSGSGKS. N-linked (GlcNAc...) asparagine glycans are attached at residues N488 and N632. The next 2 helical transmembrane spans lie at 705–725 and 745–765; these read LVVL…AILM and FYAS…LAVG. One can recognise an ABC transmembrane type-1 2 domain in the interval 705 to 992; the sequence is LVVLLGCLGG…LFQWSTSITK (288 aa). N800 carries N-linked (GlcNAc...) asparagine glycosylation. The next 4 helical transmembrane spans lie at 824–844, 846–866, 931–951, and 955–975; these read IALV…AIAF, WKLG…AGMV, MICF…GFWY, and LVSL…SVFF. A glycan (N-linked (GlcNAc...) asparagine) is linked at N995. Positions 1027–1280 constitute an ABC transporter 2 domain; it reads IAMDNVRFSY…GGLYRRMCEA (254 aa). 1062–1069 is an ATP binding site; sequence GSSGCGKS. N-linked (GlcNAc...) asparagine glycosylation is present at N1122.

This sequence belongs to the ABC transporter superfamily. ABCB family. Multidrug resistance exporter (TC 3.A.1.201) subfamily.

It is found in the cell membrane. In terms of biological role, pleiotropic ABC efflux transporter involved in the protection of the cells against a wide range of toxic compounds. This Emericella nidulans (Aspergillus nidulans) protein is ABC multidrug transporter atrC.